A 282-amino-acid polypeptide reads, in one-letter code: Para-Rep C1 (282 aa).

Residues 1–99 (MASKRWCFTL…ETLISEIGAP (99 aa)) enclose the CRESS-DNA virus Rep endonuclease domain. Residues 7–10 (CFTL) carry the RCR-1 motif. E38 and H47 together coordinate a divalent metal cation. Positions 47–49 (HLQ) match the RCR-2 motif. A Nuclear localization signal motif is present at residues 56 to 77 (KMIRLGGLKKKFGYRAHWEIAK). Y86 serves as the catalytic For DNA cleavage activity. Residues 86 to 89 (YCTK) carry the RCR-3 motif. S94 contacts a divalent metal cation. 174 to 182 (GSDGGEGKS) contributes to the ATP binding site.

This sequence belongs to the nanoviridea/circoviridae replication-associated protein family. In terms of assembly, homooligomer (Potential). Rep binds to repeated DNA motifs (iterons). The cofactor is Mg(2+). It depends on Mn(2+) as a cofactor.

The protein localises to the host nucleus. The enzyme catalyses ATP + H2O = ADP + phosphate + H(+). Its function is as follows. Initiates and terminates the replication only of its own subviral DNA molecule. The closed circular ssDNA genome is first converted to a superhelical dsDNA. Rep binds a specific hairpin at the genome origin of replication. Introduces an endonucleolytic nick within the intergenic region of the genome, thereby initiating the rolling circle replication (RCR). Following cleavage, binds covalently to the 5'-phosphate of DNA as a tyrosyl ester. The cleavage gives rise to a free 3'-OH that serves as a primer for the cellular DNA polymerase. The polymerase synthesizes the (+) strand DNA by rolling circle mechanism. After one round of replication, a Rep-catalyzed nucleotidyl transfer reaction releases a circular single-stranded virus genome, thereby terminating the replication. Displays origin-specific DNA cleavage, nucleotidyl transferase, ATPase and helicase activities. In Faba bean necrotic yellows C11 alphasatellite (FBNYC11A), this protein is Para-Rep C1 (C1).